Here is a 100-residue protein sequence, read N- to C-terminus: Urease subunit gamma (100 aa).

It belongs to the urease gamma subunit family. In terms of assembly, heterotrimer of UreA (gamma), UreB (beta) and UreC (alpha) subunits. Three heterotrimers associate to form the active enzyme.

It localises to the cytoplasm. The catalysed reaction is urea + 2 H2O + H(+) = hydrogencarbonate + 2 NH4(+). It participates in nitrogen metabolism; urea degradation; CO(2) and NH(3) from urea (urease route): step 1/1. The protein is Urease subunit gamma of Lachnoclostridium phytofermentans (strain ATCC 700394 / DSM 18823 / ISDg) (Clostridium phytofermentans).